The primary structure comprises 1430 residues: Target of rapamycin complex 2 subunit TSC11 (1430 aa).

The tract at residues 1 to 62 (MSIPHSAKQS…TITNESSKRN (62 aa)) is disordered. Polar residues-rich tracts occupy residues 7–26 (AKQS…TTPL) and 35–44 (NSSTQISSAK). Serine 19 is subject to Phosphoserine. A compositionally biased stretch (low complexity) spans 45-57 (NITSSSPSTITNE). A phosphoserine mark is found at serine 81, serine 84, serine 87, and serine 141. The stretch at 91–180 (ARRTRSTMTK…EKHIFDLKQQ (90 aa)) forms a coiled coil. A disordered region spans residues 182 to 285 (DKKRQRSLTT…NLTGDTEKDL (104 aa)). Residues 233-265 (TTPTSGTERNSQQNLNRNSTVNSRNNENHSTLS) are compositionally biased toward polar residues. One can recognise an N-terminal Ras-GEF domain in the interval 995–1100 (SVVAVADQAL…FQQKSRLPLH (106 aa)).

Belongs to the RICTOR family. The target of rapamycin complex 2 (TORC2) is composed of at least AVO1, AVO2, BIT61, LST8, TOR2 and TSC11. TORC2 forms a homodimer. Contrary to TORC1, TORC2 does not bind to and is not sensitive to FKBP-rapamycin. TSC11 binds to the N-terminal HEAT repeat region in TOR2 and is required for TORC2 integrity by tethering AVO1 and AVO2 to the complex. In terms of processing, phosphorylated by TOR2; when part of TORC2.

It is found in the cell membrane. It localises to the vacuole membrane. Essential component of TORC2, which regulates cell cycle-dependent polarization of the actin-cytoskeleton and cell wall integrity. TORC2 controls polarity of the actin cytoskeleton, which is required for orienting the secretory pathway toward discrete growth sites, via the RHO1/PKC1/MAPK cell integrity pathway. TSC11 may exert its functions through two distinct mechanisms, one mediated by AVO1 and the other mediated by AVO2 and SLM1. The polypeptide is Target of rapamycin complex 2 subunit TSC11 (TSC11) (Saccharomyces cerevisiae (strain ATCC 204508 / S288c) (Baker's yeast)).